Here is a 340-residue protein sequence, read N- to C-terminus: Uroporphyrinogen decarboxylase (340 aa).

Residues 21 to 25 (RQAGR), D71, Y148, S203, and H316 contribute to the substrate site.

The protein belongs to the uroporphyrinogen decarboxylase family. In terms of assembly, homodimer.

It localises to the cytoplasm. It catalyses the reaction uroporphyrinogen III + 4 H(+) = coproporphyrinogen III + 4 CO2. The protein operates within porphyrin-containing compound metabolism; protoporphyrin-IX biosynthesis; coproporphyrinogen-III from 5-aminolevulinate: step 4/4. In terms of biological role, catalyzes the decarboxylation of four acetate groups of uroporphyrinogen-III to yield coproporphyrinogen-III. The polypeptide is Uroporphyrinogen decarboxylase (Campylobacter hominis (strain ATCC BAA-381 / DSM 21671 / CCUG 45161 / LMG 19568 / NCTC 13146 / CH001A)).